The following is a 232-amino-acid chain: GTP cyclohydrolase III (232 aa).

Belongs to the archaeal-type GTP cyclohydrolase family.

The enzyme catalyses GTP + 3 H2O = 2-amino-5-formylamino-6-(5-phospho-D-ribosylamino)pyrimidin-4(3H)-one + 2 phosphate + 2 H(+). Functionally, catalyzes the formation of 2-amino-5-formylamino-6-ribofuranosylamino-4(3H)-pyrimidinone ribonucleotide monophosphate and inorganic phosphate from GTP. Also has an independent pyrophosphate phosphohydrolase activity. This is GTP cyclohydrolase III from Saccharolobus islandicus (strain Y.N.15.51 / Yellowstone #2) (Sulfolobus islandicus).